A 477-amino-acid polypeptide reads, in one-letter code: Ribulose bisphosphate carboxylase large chain (477 aa).

Residues 1–2 (MS) constitute a propeptide that is removed on maturation. At P3 the chain carries N-acetylproline. K14 carries the post-translational modification N6,N6,N6-trimethyllysine. Substrate-binding residues include N123 and T173. K175 acts as the Proton acceptor in catalysis. Substrate is bound at residue K177. K201, D203, and E204 together coordinate Mg(2+). An N6-carboxylysine modification is found at K201. The active-site Proton acceptor is H294. Substrate-binding residues include R295, H327, and S379.

The protein belongs to the RuBisCO large chain family. Type I subfamily. In terms of assembly, heterohexadecamer of 8 large chains and 8 small chains; disulfide-linked. The disulfide link is formed within the large subunit homodimers. Mg(2+) serves as cofactor. In terms of processing, the disulfide bond which can form in the large chain dimeric partners within the hexadecamer appears to be associated with oxidative stress and protein turnover.

The protein resides in the plastid. The protein localises to the chloroplast. It catalyses the reaction 2 (2R)-3-phosphoglycerate + 2 H(+) = D-ribulose 1,5-bisphosphate + CO2 + H2O. The enzyme catalyses D-ribulose 1,5-bisphosphate + O2 = 2-phosphoglycolate + (2R)-3-phosphoglycerate + 2 H(+). Its function is as follows. RuBisCO catalyzes two reactions: the carboxylation of D-ribulose 1,5-bisphosphate, the primary event in carbon dioxide fixation, as well as the oxidative fragmentation of the pentose substrate in the photorespiration process. Both reactions occur simultaneously and in competition at the same active site. The protein is Ribulose bisphosphate carboxylase large chain of Agrostis stolonifera (Creeping bentgrass).